The chain runs to 737 residues: Protein penguin (737 aa).

The segment at 1–128 is disordered; that stretch reads MVSSEPKGPA…EKKDLKLKRK (128 aa). Composition is skewed to basic and acidic residues over residues 76-89 and 107-122; these read KKFD…DKRL and EGEK…EKKD. Residues 139–490 form the PUM-HD domain; sequence EANQIHEKLR…EILEQIEAPI (352 aa). Pumilio repeat units follow at residues 167 to 202, 203 to 238, 239 to 274, 388 to 425, and 426 to 462; these read NVGD…EISE, KLLP…KLVD, SLYG…YMRQ, NIKE…AIYD, and HLHG…EFIR. A disordered region spans residues 577–638; that stretch reads VESSSDDEDE…EEEPAAPLVS (62 aa). Residues 580-600 are compositionally biased toward acidic residues; that stretch reads SSDDEDEDEDEDEESDDEGDE. The segment covering 601-615 has biased composition (basic and acidic residues); that stretch reads KEQKEAAADDAEPKV. The segment covering 616–626 has biased composition (basic residues); that stretch reads KKAKKEPKKPK.

This chain is Protein penguin, found in Drosophila melanogaster (Fruit fly).